Here is a 232-residue protein sequence, read N- to C-terminus: Vacuolar iron transporter homolog 1 (232 aa).

The Cytoplasmic segment spans residues 1–59; the sequence is MAIDLGCHVGCASPETKQEETADPTAAPVVVDDVEAAAGGRRPGDGGGVNYVARAQWLR. A helical transmembrane segment spans residues 60 to 80; sequence AAVLGANDGLVSVASLMVGVG. The Vacuolar portion of the chain corresponds to 81-89; that stretch reads AANGTRRAM. The helical transmembrane segment at 90-110 threads the bilayer; that stretch reads LVSGLAGLVAGACSMAIGEFV. At 111 to 148 the chain is on the cytoplasmic side; that stretch reads SVYAQCDIQAAQIERARGGKDADGGEEEEELPSPTMAA. Residues 149 to 169 form a helical membrane-spanning segment; it reads VASALSFAAGAALPLLAGGFV. Residues 170–175 are Vacuolar-facing; the sequence is RPWAAR. A helical membrane pass occupies residues 176–196; the sequence is VAAVCAASSLGLAGFGVASAY. Residues 197-208 are Cytoplasmic-facing; the sequence is LGGAGVARSGVR. Residues 209–229 form a helical membrane-spanning segment; it reads MLVGGWLAMAVTYGVLKLFGM. At 230-232 the chain is on the vacuolar side; that stretch reads HGV.

The protein belongs to the CCC1 family.

The protein resides in the vacuole membrane. It catalyses the reaction Fe(2+)(in) = Fe(2+)(out). Probable vacuolar iron transporter that may be involved in the regulation of iron distribution throughout the plant. This is Vacuolar iron transporter homolog 1 from Oryza sativa subsp. japonica (Rice).